A 102-amino-acid chain; its full sequence is Small ribosomal subunit protein uS10 (102 aa).

Belongs to the universal ribosomal protein uS10 family. As to quaternary structure, part of the 30S ribosomal subunit.

In terms of biological role, involved in the binding of tRNA to the ribosomes. This is Small ribosomal subunit protein uS10 from Parafrankia sp. (strain EAN1pec).